We begin with the raw amino-acid sequence, 255 residues long: uncharacterized protein (255 aa).

This sequence belongs to the methyltransferase superfamily.

This is an uncharacterized protein from Mycolicibacterium gilvum (strain PYR-GCK) (Mycobacterium gilvum (strain PYR-GCK)).